Here is a 375-residue protein sequence, read N- to C-terminus: Chaperone protein DnaJ (375 aa).

In terms of domain architecture, J spans Asp6–Gly71. Residues Gly132–Gln214 form a CR-type zinc finger. Residues Cys145, Cys148, Cys162, Cys165, Cys188, Cys191, Cys202, and Cys205 each contribute to the Zn(2+) site. 4 CXXCXGXG motif repeats span residues Cys145 to Gly152, Cys162 to Gly169, Cys188 to Gly195, and Cys202 to Gly209. A disordered region spans residues Pro222–Gly243.

Belongs to the DnaJ family. As to quaternary structure, homodimer. The cofactor is Zn(2+).

Its subcellular location is the cytoplasm. In terms of biological role, participates actively in the response to hyperosmotic and heat shock by preventing the aggregation of stress-denatured proteins and by disaggregating proteins, also in an autonomous, DnaK-independent fashion. Unfolded proteins bind initially to DnaJ; upon interaction with the DnaJ-bound protein, DnaK hydrolyzes its bound ATP, resulting in the formation of a stable complex. GrpE releases ADP from DnaK; ATP binding to DnaK triggers the release of the substrate protein, thus completing the reaction cycle. Several rounds of ATP-dependent interactions between DnaJ, DnaK and GrpE are required for fully efficient folding. Also involved, together with DnaK and GrpE, in the DNA replication of plasmids through activation of initiation proteins. The chain is Chaperone protein DnaJ from Halothermothrix orenii (strain H 168 / OCM 544 / DSM 9562).